The primary structure comprises 256 residues: Diacetyl reductase [(S)-acetoin forming] (256 aa).

Residues leucine 6–aspartate 33 and aspartate 59 each bind NAD(+). A substrate-binding site is contributed by serine 139. Catalysis depends on tyrosine 152, which acts as the Proton acceptor. NAD(+) is bound at residue lysine 156.

The protein belongs to the short-chain dehydrogenases/reductases (SDR) family. As to quaternary structure, homotetramer.

It catalyses the reaction (S)-acetoin + NAD(+) = diacetyl + NADH + H(+). In terms of biological role, catalyzes the reversible reduction of (S)-acetoin to 2,3-butanediol in the presence of NADH. This Klebsiella pneumoniae protein is Diacetyl reductase [(S)-acetoin forming] (budC).